The following is an 836-amino-acid chain: RNA-binding protein 12B-A (836 aa).

One can recognise an RRM 1 domain in the interval 154 to 229 (PYLFLRGLPY…RFIEVMQGSE (76 aa)). A disordered region spans residues 237 to 277 (GTATEGGDTPRMRSEEHSPSRRINGRHFRKRSHSKSPRARS). Residues 244–255 (DTPRMRSEEHSP) show a composition bias toward basic and acidic residues. Basic residues predominate over residues 259-277 (INGRHFRKRSHSKSPRARS). 2 consecutive RRM domains span residues 283-359 (FYVH…PVSR) and 401-478 (LCIY…LISE). Disordered stretches follow at residues 539-572 (GHFKHPQGYFRQSDRRSPEDFRHSPEDYRHPWEE) and 620-644 (SQEHFRRSYQEHIRQPPEEHFRRSR). Over residues 550-572 (QSDRRSPEDFRHSPEDYRHPWEE) the composition is skewed to basic and acidic residues. Position 703 is a phosphoserine (Ser-703). An N6-acetyllysine modification is found at Lys-758. The 77-residue stretch at 760–836 (IPVKISNLPF…GPRKVKLSLL (77 aa)) folds into the RRM 4 domain.

The chain is RNA-binding protein 12B-A (Rbm12b1) from Mus musculus (Mouse).